A 290-amino-acid chain; its full sequence is Probable septum site-determining protein MinC (290 aa).

This sequence belongs to the MinC family. As to quaternary structure, interacts with MinD and FtsZ.

In terms of biological role, cell division inhibitor that blocks the formation of polar Z ring septums. Rapidly oscillates between the poles of the cell to destabilize FtsZ filaments that have formed before they mature into polar Z rings. Prevents FtsZ polymerization. The polypeptide is Probable septum site-determining protein MinC (Heliobacterium modesticaldum (strain ATCC 51547 / Ice1)).